A 157-amino-acid chain; its full sequence is Protein Smg homolog (157 aa).

The protein belongs to the Smg family.

The protein is Protein Smg homolog of Shewanella frigidimarina (strain NCIMB 400).